The following is a 224-amino-acid chain: Triosephosphate isomerase (224 aa).

9 to 11 (NFK) is a substrate binding site. Residue His93 is the Electrophile of the active site. Residue Glu141 is the Proton acceptor of the active site. Residues Ile146, Gly181, and 202–203 (AS) contribute to the substrate site.

Belongs to the triosephosphate isomerase family. Homotetramer; dimer of dimers.

The protein resides in the cytoplasm. The catalysed reaction is D-glyceraldehyde 3-phosphate = dihydroxyacetone phosphate. Its pathway is carbohydrate biosynthesis; gluconeogenesis. It functions in the pathway carbohydrate degradation; glycolysis; D-glyceraldehyde 3-phosphate from glycerone phosphate: step 1/1. Functionally, involved in the gluconeogenesis. Catalyzes stereospecifically the conversion of dihydroxyacetone phosphate (DHAP) to D-glyceraldehyde-3-phosphate (G3P). The sequence is that of Triosephosphate isomerase from Pyrobaculum arsenaticum (strain DSM 13514 / JCM 11321 / PZ6).